Consider the following 350-residue polypeptide: Uroporphyrinogen decarboxylase (350 aa).

Substrate-binding positions include 28 to 32, Phe-47, Asp-78, Tyr-155, Ser-210, and His-325; that span reads RQAGR.

This sequence belongs to the uroporphyrinogen decarboxylase family. Homodimer.

The protein localises to the cytoplasm. It carries out the reaction uroporphyrinogen III + 4 H(+) = coproporphyrinogen III + 4 CO2. It participates in porphyrin-containing compound metabolism; protoporphyrin-IX biosynthesis; coproporphyrinogen-III from 5-aminolevulinate: step 4/4. Its function is as follows. Catalyzes the decarboxylation of four acetate groups of uroporphyrinogen-III to yield coproporphyrinogen-III. The polypeptide is Uroporphyrinogen decarboxylase (Nostoc sp. (strain PCC 7120 / SAG 25.82 / UTEX 2576)).